The primary structure comprises 459 residues: SLIT-ROBO Rho GTPase-activating protein 2C (459 aa).

Residues 22–325 (KEIRAQLTEQ…AVENLDATSD (304 aa)) enclose the F-BAR domain. Over residues 181 to 202 (LKEAEKQEEKQIGKSVKQEDRQ) the composition is skewed to basic and acidic residues. A disordered region spans residues 181–211 (LKEAEKQEEKQIGKSVKQEDRQTPCSPDSTA). Residues 363–401 (QSELVQRCQQLQSRLSTLKIENEEVKKTMEATLQTIQDI) adopt a coiled-coil conformation.

As to quaternary structure, homodimer. Interacts (via F-BAR domain) with SRGAP2/SRGAP2A (via F-BAR domain); formation of the heterodimer inhibits SRGAP2/SRGAP2A function. Ubiquitously expressed with higher expression in cerebellum. Probably expressed in fetal and adult neurons (at protein level).

Functionally, human-specific protein that acts as a key modifier of cortical connectivity in the human brain. Acts by inhibiting the functions of ancestral paralog SRGAP2/SRGAP2A, a postsynaptic protein that regulates excitatory and inhibitory synapse maturation and density in cortical pyramidal neurons. SRGAP2C is unstable but is able to heterodimerize with SRGAP2/SRGAP2A, thereby reducing SRGAP2/SRGAP2A levels through proteasome-dependent degradation. Inhibition of SRGAP2/SRGAP2A by SRGAP2C leads to an increase in synaptic density and protracted synaptic maturation of both excitatory and inhibitory synapses. Modifies cortical circuit connectivity by increasing the number of local and long-range cortical inputs received by layer 2/3 pyramidal neurons. Also able to increase the probability of sensory-evoked responses by layer 2/3 pyramidal neurons. The sequence is that of SLIT-ROBO Rho GTPase-activating protein 2C from Homo sapiens (Human).